The primary structure comprises 126 residues: Anti-adapter protein IraD (126 aa).

The protein belongs to the GpW/Gp25 family. IraD subfamily. Interacts with RssB.

The protein resides in the cytoplasm. Functionally, inhibits RpoS proteolysis by regulating RssB activity, thereby increasing the stability of the sigma stress factor RpoS during oxidative stress. Its effect on RpoS stability is due to its interaction with RssB, which probably blocks the interaction of RssB with RpoS, and the consequent delivery of the RssB-RpoS complex to the ClpXP protein degradation pathway. The sequence is that of Anti-adapter protein IraD from Salmonella choleraesuis (strain SC-B67).